A 296-amino-acid chain; its full sequence is Large ribosomal subunit protein uL18A (296 aa).

The segment at 251–296 (PVHEKKPKKEVKKKRWNRAKLSLEQKKDRVAQKKASFLRAQEKADS) is disordered. Residues 255–268 (KKPKKEVKKKRWNR) are compositionally biased toward basic residues. Basic and acidic residues predominate over residues 271 to 281 (LSLEQKKDRVA).

This sequence belongs to the universal ribosomal protein uL18 family. Component of the large ribosomal subunit (LSU). Part of a LSU subcomplex, the 5S RNP which is composed of the 5S RNA, RPL5 and RPL11.

The protein resides in the cytoplasm. Its subcellular location is the nucleus. It is found in the nucleolus. In terms of biological role, component of the ribosome, a large ribonucleoprotein complex responsible for the synthesis of proteins in the cell. The small ribosomal subunit (SSU) binds messenger RNAs (mRNAs) and translates the encoded message by selecting cognate aminoacyl-transfer RNA (tRNA) molecules. The large subunit (LSU) contains the ribosomal catalytic site termed the peptidyl transferase center (PTC), which catalyzes the formation of peptide bonds, thereby polymerizing the amino acids delivered by tRNAs into a polypeptide chain. The nascent polypeptides leave the ribosome through a tunnel in the LSU and interact with protein factors that function in enzymatic processing, targeting, and the membrane insertion of nascent chains at the exit of the ribosomal tunnel. As part of the 5S RNP/5S ribonucleoprotein particle it is an essential component of the LSU, required for its formation and the maturation of rRNAs. It also couples ribosome biogenesis to p53/TP53 activation. As part of the 5S RNP it accumulates in the nucleoplasm and inhibits MDM2, when ribosome biogenesis is perturbed, mediating the stabilization and the activation of TP53. The sequence is that of Large ribosomal subunit protein uL18A (rpl5-a) from Xenopus laevis (African clawed frog).